The primary structure comprises 122 residues: MIQQESRLKVADNSGAREILTIKVLGGSGRKFANIGDMIVATVKQAIPGGTVKKGDVVKAVIVRTVSGVHRIDGSYIKFDENAAVIVRDDKSPVGTRIFGPVARELRDNNYMRIVSLAPEVL.

This sequence belongs to the universal ribosomal protein uL14 family. In terms of assembly, part of the 50S ribosomal subunit. Forms a cluster with proteins L3 and L19. In the 70S ribosome, L14 and L19 interact and together make contacts with the 16S rRNA in bridges B5 and B8.

In terms of biological role, binds to 23S rRNA. Forms part of two intersubunit bridges in the 70S ribosome. This Oenococcus oeni (strain ATCC BAA-331 / PSU-1) protein is Large ribosomal subunit protein uL14.